Consider the following 605-residue polypeptide: Putative zinc finger CCCH domain-containing protein 57 (605 aa).

Disordered stretches follow at residues arginine 198 to valine 218, leucine 238 to valine 261, and glutamine 375 to proline 403. Basic and acidic residues-rich tracts occupy residues glycine 201–valine 218 and leucine 238–alanine 250. A compositionally biased stretch (low complexity) spans phenylalanine 389–proline 403. C3H1-type zinc fingers lie at residues glutamate 519–aspartate 547 and lysine 557–leucine 585.

This Oryza sativa subsp. japonica (Rice) protein is Putative zinc finger CCCH domain-containing protein 57.